Reading from the N-terminus, the 306-residue chain is Putative S-adenosyl-L-methionine-dependent methyltransferase Mvan_1345 (306 aa).

S-adenosyl-L-methionine-binding positions include aspartate 134 and 163–164; that span reads DL.

The protein belongs to the UPF0677 family.

In terms of biological role, exhibits S-adenosyl-L-methionine-dependent methyltransferase activity. The polypeptide is Putative S-adenosyl-L-methionine-dependent methyltransferase Mvan_1345 (Mycolicibacterium vanbaalenii (strain DSM 7251 / JCM 13017 / BCRC 16820 / KCTC 9966 / NRRL B-24157 / PYR-1) (Mycobacterium vanbaalenii)).